An 862-amino-acid polypeptide reads, in one-letter code: MLSIAHKIFGSTNSRIIKSFHKVVQDINAIEHEIQLLSNEALKHKTIEFKEELKNGKTLDDILVPAFAVVREASKRVLNMRHFDVQLIGGIVLHKGMISEMKTGEGKTLVATLAAYLNALEGKGVHIVTVNDYLAKRDAEWMGELYSALGITVGCILTETNDLERKNAYNCDILYSTNNNLGFDYLRDNMKFSRDEMVQRGFNYAIVDEVDSILIDEARTPLIISGQVDQDIKMYKKIDNLIYELAEEDYELEEKNRNIFLTEAGITKIENLLIQHNLISSNTSLYDIDNIIIMHYITQALRAHKMFAVDKDYIIKDGNIVIIDEFTGRMMDGRRYSDGLHQALEAKEKLNINSENQTLASTTFQNYFRMYTKLSGMTGTAETESEEFLGIYNLQVVQIPTNIPVQRIDLNDDIYCTEEEKFNSVIKFISECHKKLQPVLVGTVSIEKSEMLSKLLTKNKLKHSVLNARYHEQEAYIIAQAGIPGTITIATNMAGRGTDIQLGGNLKMLAKTALANITDKEAIEIKYKQLTEKVNRDKEIAIQAGGLCVIGTERHESRRIDNQLRGRSGRQGDPGLSKFFLSLEDDLLRIFGSDKIKGVLQKLGMKKDEAIQHTWISRSIEKAQHKVESRNYDIRKSLLKFDNVINEQRKVVFDQRNKILDSDSYDISIIYRDLNSDIVNSIIHDKYYNLDDDTYKALSSEFTRIYNITLDYSTISNFESKDKVLEHLNETVDEHFAQKIEEFTLKDQKAWDHVVKKVMIMSLDYLWRDHLAALDSLKCGINLRSIAQKDPLNEFKAEAFSMLENMMSKFYELIIQRLSHLKFDIELNDTQRIEYNIHHSKISRNEKCPCGSGKKFKHCHGA.

Residues glutamine 86, 104–108 (GEGKT), and aspartate 499 contribute to the ATP site. Positions 848, 850, 859, and 860 each coordinate Zn(2+).

This sequence belongs to the SecA family. As to quaternary structure, monomer and homodimer. Part of the essential Sec protein translocation apparatus which comprises SecA, SecYEG and auxiliary proteins SecDF-YajC and YidC. Zn(2+) is required as a cofactor.

It localises to the cell inner membrane. The protein resides in the cytoplasm. It catalyses the reaction ATP + H2O + cellular proteinSide 1 = ADP + phosphate + cellular proteinSide 2.. Its function is as follows. Part of the Sec protein translocase complex. Interacts with the SecYEG preprotein conducting channel. Has a central role in coupling the hydrolysis of ATP to the transfer of proteins into and across the cell membrane, serving both as a receptor for the preprotein-SecB complex and as an ATP-driven molecular motor driving the stepwise translocation of polypeptide chains across the membrane. In Ehrlichia chaffeensis (strain ATCC CRL-10679 / Arkansas), this protein is Protein translocase subunit SecA.